The primary structure comprises 251 residues: Triosephosphate isomerase (251 aa).

A substrate-binding site is contributed by 9–11; it reads NWK. His-94 serves as the catalytic Electrophile. The Proton acceptor role is filled by Glu-166. Residues Gly-172, Ser-211, and 232–233 contribute to the substrate site; that span reads GG.

The protein belongs to the triosephosphate isomerase family. Homodimer.

It localises to the cytoplasm. It carries out the reaction D-glyceraldehyde 3-phosphate = dihydroxyacetone phosphate. It participates in carbohydrate biosynthesis; gluconeogenesis. It functions in the pathway carbohydrate degradation; glycolysis; D-glyceraldehyde 3-phosphate from glycerone phosphate: step 1/1. Functionally, involved in the gluconeogenesis. Catalyzes stereospecifically the conversion of dihydroxyacetone phosphate (DHAP) to D-glyceraldehyde-3-phosphate (G3P). The sequence is that of Triosephosphate isomerase from Xanthomonas euvesicatoria pv. vesicatoria (strain 85-10) (Xanthomonas campestris pv. vesicatoria).